Reading from the N-terminus, the 342-residue chain is Anthranilate phosphoribosyltransferase (342 aa).

Residues glycine 83, 86–87 (GD), threonine 91, 93–96 (NIST), 111–119 (KHGGRSVSS), and alanine 123 contribute to the 5-phospho-alpha-D-ribose 1-diphosphate site. Glycine 83 provides a ligand contact to anthranilate. Serine 95 serves as a coordination point for Mg(2+). Arginine 169 lines the anthranilate pocket. Residues aspartate 228 and glutamate 229 each contribute to the Mg(2+) site.

The protein belongs to the anthranilate phosphoribosyltransferase family. As to quaternary structure, homodimer. Requires Mg(2+) as cofactor.

It catalyses the reaction N-(5-phospho-beta-D-ribosyl)anthranilate + diphosphate = 5-phospho-alpha-D-ribose 1-diphosphate + anthranilate. The protein operates within amino-acid biosynthesis; L-tryptophan biosynthesis; L-tryptophan from chorismate: step 2/5. Functionally, catalyzes the transfer of the phosphoribosyl group of 5-phosphorylribose-1-pyrophosphate (PRPP) to anthranilate to yield N-(5'-phosphoribosyl)-anthranilate (PRA). The chain is Anthranilate phosphoribosyltransferase from Neisseria gonorrhoeae (strain ATCC 700825 / FA 1090).